The chain runs to 232 residues: Peptidyl-prolyl cis-trans isomerase CYP26-1 (232 aa).

Positions Phe7–Glu166 constitute a PPIase cyclophilin-type domain. The N-linked (GlcNAc...) asparagine glycan is linked to Asn108. The chain crosses the membrane as a helical span at residues Tyr212–Val232.

It belongs to the cyclophilin-type PPIase family. In terms of tissue distribution, expressed only in flowers.

Its subcellular location is the membrane. It catalyses the reaction [protein]-peptidylproline (omega=180) = [protein]-peptidylproline (omega=0). In terms of biological role, PPIases accelerate the folding of proteins. It catalyzes the cis-trans isomerization of proline imidic peptide bonds in oligopeptides. This Arabidopsis thaliana (Mouse-ear cress) protein is Peptidyl-prolyl cis-trans isomerase CYP26-1 (CYP26-1).